The primary structure comprises 478 residues: 2-succinylbenzoate--CoA ligase (478 aa).

This sequence belongs to the ATP-dependent AMP-binding enzyme family. MenE subfamily.

It catalyses the reaction 2-succinylbenzoate + ATP + CoA = 2-succinylbenzoyl-CoA + AMP + diphosphate. The protein operates within quinol/quinone metabolism; 1,4-dihydroxy-2-naphthoate biosynthesis; 1,4-dihydroxy-2-naphthoate from chorismate: step 5/7. It participates in quinol/quinone metabolism; menaquinone biosynthesis. Its function is as follows. Converts 2-succinylbenzoate (OSB) to 2-succinylbenzoyl-CoA (OSB-CoA). In Bacillus licheniformis (strain ATCC 14580 / DSM 13 / JCM 2505 / CCUG 7422 / NBRC 12200 / NCIMB 9375 / NCTC 10341 / NRRL NRS-1264 / Gibson 46), this protein is 2-succinylbenzoate--CoA ligase.